A 60-amino-acid polypeptide reads, in one-letter code: Large ribosomal subunit protein uL30 (60 aa).

The protein belongs to the universal ribosomal protein uL30 family. As to quaternary structure, part of the 50S ribosomal subunit.

This is Large ribosomal subunit protein uL30 from Xanthobacter autotrophicus (strain ATCC BAA-1158 / Py2).